We begin with the raw amino-acid sequence, 740 residues long: Autotransporter adhesin BtaE (740 aa).

The signal sequence occupies residues 1–11 (MFGLSVNHAYA). The interval 12–647 (GPGIFINDGT…LQTLDQANAY (636 aa)) is surface exposed passenger domain. The segment at 648-686 (TDKKFGKLNEDIVATRIEARQAAAIGLAAASLRYDDRPG) is outer membrane translocation of the passenger domain. A run of 4 beta stranded transmembrane segments spans residues 686-696 (GKISAAIGGGF), 700-710 (EGAVALGLGHT), 719-725 (NLSAATS), and 728-739 (NWGMGAGFSYTF). The segment at 687–740 (KISAAIGGGFWRGEGAVALGLGHTSEDQRMRSNLSAATSGGNWGMGAGFSYTFN) is translocator domain.

The protein belongs to the autotransporter-2 (AT-2) (TC 1.B.40) family. In terms of assembly, homotrimer.

The protein resides in the cell surface. It localises to the cell outer membrane. Its function is as follows. Binds to hyaluronic acid and epithelial cells, and is required for full virulence in the mouse model. This chain is Autotransporter adhesin BtaE, found in Brucella suis biovar 1 (strain 1330).